The primary structure comprises 1954 residues: Integrin beta-like protein C (1954 aa).

Residues 1 to 20 (MNKLFYLFILIASLFILTDA) form the signal peptide. Over 21 to 1883 (SHFRFGTISW…TTTQTNDNKT (1863 aa)) the chain is Extracellular. N-linked (GlcNAc...) asparagine glycans are attached at residues asparagine 138 and asparagine 354. One can recognise an EGF-like domain in the interval 428–465 (YGENCVAVPPCVNGVPNSGINGDGKCLCSNGWTGADCS). 2 cysteine pairs are disulfide-bonded: cysteine 438/cysteine 453 and cysteine 455/cysteine 464. N-linked (GlcNAc...) asparagine glycosylation occurs at asparagine 479. A VWFA domain is found at 521 to 706 (DVYVLVDANL…TGVKNVLSKI (186 aa)). Asparagine 1348, asparagine 1382, asparagine 1628, asparagine 1678, asparagine 1742, asparagine 1770, asparagine 1820, asparagine 1860, and asparagine 1881 each carry an N-linked (GlcNAc...) asparagine glycan. The chain crosses the membrane as a helical span at residues 1884–1904 (VLTGAIAGAAAGTALIAAAAW). Residues 1905-1954 (RLLRKAAPPTDTFFSEAAFLGDGVSSNPLYEQSASAAENPLYQSASDTTD) are Cytoplasmic-facing.

It belongs to the SIB family. As to quaternary structure, interacts with talA/talin.

It is found in the membrane. Implicated in cellular adhesion. The protein is Integrin beta-like protein C (sibC) of Dictyostelium discoideum (Social amoeba).